Reading from the N-terminus, the 243-residue chain is Small ribosomal subunit protein mS23 (243 aa).

It belongs to the mitochondrion-specific ribosomal protein mS23 family. Component of the mitochondrial small ribosomal subunit.

The protein resides in the mitochondrion. The chain is Small ribosomal subunit protein mS23 (rsm25) from Emericella nidulans (strain FGSC A4 / ATCC 38163 / CBS 112.46 / NRRL 194 / M139) (Aspergillus nidulans).